The chain runs to 172 residues: MKTMFILALIALAATSVVAQLDTTCSQGYGQCQQQPQQQVNTCSALLQQCSPTPYVQSQMWQASGCQLMRQQCCQPLAQISEQARCQAVCSVAQVIMRQQQGQSFGQPQQQVQSFSQPQHQVPIEITRMVLQTLPSMCNVNIPQYCTTTPCRTITQTPYNIPMSATCVGGTC.

The signal sequence occupies residues 1–19 (MKTMFILALIALAATSVVA).

It belongs to the prolamin family. Post-translationally, contains 7 disulfide bonds.

Its function is as follows. Seed storage protein. Not integrated in the gluten polymer through disulfide bonds, unless incorporated by reduction and reoxidation during dough making. Increases dough strength and bread volume, but decreases dough stability when added into a base wheat flour. The chain is Avenin-like a4 from Triticum aestivum (Wheat).